Consider the following 213-residue polypeptide: Transcription antitermination protein NusB (213 aa).

Belongs to the NusB family.

Its function is as follows. Involved in transcription antitermination. Required for transcription of ribosomal RNA (rRNA) genes. Binds specifically to the boxA antiterminator sequence of the ribosomal RNA (rrn) operons. This chain is Transcription antitermination protein NusB, found in Synechococcus elongatus (strain ATCC 33912 / PCC 7942 / FACHB-805) (Anacystis nidulans R2).